The chain runs to 817 residues: DNA mismatch repair protein MutS (817 aa).

604–611 (GPNMSGKS) contributes to the ATP binding site.

Belongs to the DNA mismatch repair MutS family.

In terms of biological role, this protein is involved in the repair of mismatches in DNA. It is possible that it carries out the mismatch recognition step. This protein has a weak ATPase activity. This chain is DNA mismatch repair protein MutS, found in Petrotoga mobilis (strain DSM 10674 / SJ95).